The following is a 250-amino-acid chain: Probable transcriptional regulatory protein SYNPCC7002_A1640 (250 aa).

This sequence belongs to the TACO1 family.

Its subcellular location is the cytoplasm. The polypeptide is Probable transcriptional regulatory protein SYNPCC7002_A1640 (Picosynechococcus sp. (strain ATCC 27264 / PCC 7002 / PR-6) (Agmenellum quadruplicatum)).